The primary structure comprises 184 residues: Ras-related protein RabN2 (184 aa).

Position 3 to 10 (3 to 10) interacts with GTP; sequence GDYRSGKT. Residues 25–32 carry the Effector region motif; it reads TNPSTFDY. GTP is bound by residues 50–54 and 117–120; these read DTAGH and TKSD.

The protein belongs to the small GTPase superfamily. Rab family.

The sequence is that of Ras-related protein RabN2 (rabN2) from Dictyostelium discoideum (Social amoeba).